A 189-amino-acid chain; its full sequence is MINTNDFKTGQTIKFNNQIYQILEFLHVKPGKGAAFVRTKLRNLRTGSVIDYTFNAGIKVQPALITKIKMQFLYALEDNYIFMNTQNYEQLEINKHQLKDFLKYLYEGLLVDIIFYENDEIVGITLPDKISIKVAYTEPGAKGDTKTNSLKDAALETGLVIKVPLFINIGEKIIINTETGLYLSRDNNK.

Belongs to the elongation factor P family.

Its subcellular location is the cytoplasm. It participates in protein biosynthesis; polypeptide chain elongation. In terms of biological role, involved in peptide bond synthesis. Stimulates efficient translation and peptide-bond synthesis on native or reconstituted 70S ribosomes in vitro. Probably functions indirectly by altering the affinity of the ribosome for aminoacyl-tRNA, thus increasing their reactivity as acceptors for peptidyl transferase. The protein is Elongation factor P of Onion yellows phytoplasma (strain OY-M).